Consider the following 1420-residue polypeptide: Putative mediator of RNA polymerase II transcription subunit 14 (1420 aa).

Positions 1–43 (MDQNQQQQQQQQQQQQQQQQQQQQQQQQQQQQQQQQQQQQQQQ) form a coiled coil. Low complexity-rich tracts occupy residues 1 to 43 (MDQN…QQQQ) and 449 to 474 (TTSSSSSSSSNNNNTASPIINRNNNN). Disordered stretches follow at residues 1 to 59 (MDQN…TTPI), 449 to 490 (TTSS…NPLS), 750 to 799 (QQDI…GYKN), and 1389 to 1420 (QQQQQQQQQQQQQQQQQQIENNNFASASSSIR). Residues 475-490 (GKPNLLSTKQSNNPLS) are compositionally biased toward polar residues. Low complexity-rich tracts occupy residues 755-795 (NNNN…NGNN) and 1389-1406 (QQQQQQQQQQQQQQQQQQ). A coiled-coil region spans residues 1382-1412 (LLIQQQQQQQQQQQQQQQQQQQQQQIENNNF). Residues 1407–1420 (IENNNFASASSSIR) are compositionally biased toward polar residues.

It belongs to the Mediator complex subunit 14 family. As to quaternary structure, component of the Mediator complex.

It is found in the nucleus. Functionally, component of the Mediator complex, a coactivator involved in the regulated transcription of nearly all RNA polymerase II-dependent genes. Mediator functions as a bridge to convey information from gene-specific regulatory proteins to the basal RNA polymerase II transcription machinery. Mediator is recruited to promoters by direct interactions with regulatory proteins and serves as a scaffold for the assembly of a functional preinitiation complex with RNA polymerase II and the general transcription factors. This Dictyostelium discoideum (Social amoeba) protein is Putative mediator of RNA polymerase II transcription subunit 14 (med14).